The sequence spans 60 residues: U20-myrmicitoxin-Mri1a (60 aa).

Residues 1-24 form the signal peptide; sequence MKSVILLFAVIAIIVAVIIPAING. Residues 25–34 constitute a propeptide that is removed on maturation; that stretch reads ESSSNPSANA.

Belongs to the formicidae venom precursor-01 superfamily. As to expression, expressed by the venom gland.

The protein localises to the secreted. In terms of biological role, induces paralysis 5 minutes after injection into blowflies (L.caesar), and then death within 24 hours. May have antimicrobial properties, like most ant linear peptides. In Manica rubida (European giant red ant), this protein is U20-myrmicitoxin-Mri1a.